The chain runs to 369 residues: tRNA-specific 2-thiouridylase MnmA (369 aa).

Residues 12–19 (GMSGGVDS) and Met38 contribute to the ATP site. The segment at 98–100 (NPD) is interaction with target base in tRNA. Catalysis depends on Cys103, which acts as the Nucleophile. Cysteines 103 and 200 form a disulfide. Position 128 (Gly128) interacts with ATP. The interval 150 to 152 (KDQ) is interaction with tRNA. Cys200 acts as the Cysteine persulfide intermediate in catalysis. The interval 312 to 313 (RY) is interaction with tRNA.

Belongs to the MnmA/TRMU family.

The protein resides in the cytoplasm. The catalysed reaction is S-sulfanyl-L-cysteinyl-[protein] + uridine(34) in tRNA + AH2 + ATP = 2-thiouridine(34) in tRNA + L-cysteinyl-[protein] + A + AMP + diphosphate + H(+). Functionally, catalyzes the 2-thiolation of uridine at the wobble position (U34) of tRNA, leading to the formation of s(2)U34. The sequence is that of tRNA-specific 2-thiouridylase MnmA from Tolumonas auensis (strain DSM 9187 / NBRC 110442 / TA 4).